The primary structure comprises 205 residues: Probable GTP-binding protein EngB (205 aa).

An EngB-type G domain is found at 27 to 201 (TGIEIAFAGR…AAKLDFWFSP (175 aa)). GTP contacts are provided by residues 35 to 42 (GRSNAGKS), 62 to 66 (GRTQL), 80 to 83 (DLPG), 147 to 150 (TKAD), and 180 to 182 (FSA). 2 residues coordinate Mg(2+): Ser-42 and Thr-64.

The protein belongs to the TRAFAC class TrmE-Era-EngA-EngB-Septin-like GTPase superfamily. EngB GTPase family. The cofactor is Mg(2+).

In terms of biological role, necessary for normal cell division and for the maintenance of normal septation. The protein is Probable GTP-binding protein EngB of Haemophilus influenzae (strain PittEE).